A 201-amino-acid chain; its full sequence is Holliday junction resolvase RecU (201 aa).

Mg(2+)-binding residues include Thr-87, Asp-89, Asp-102, and Gln-121.

It belongs to the RecU family. Requires Mg(2+) as cofactor.

It is found in the cytoplasm. It carries out the reaction Endonucleolytic cleavage at a junction such as a reciprocal single-stranded crossover between two homologous DNA duplexes (Holliday junction).. In terms of biological role, endonuclease that resolves Holliday junction intermediates in genetic recombination. Cleaves mobile four-strand junctions by introducing symmetrical nicks in paired strands. Promotes annealing of linear ssDNA with homologous dsDNA. Required for DNA repair, homologous recombination and chromosome segregation. In Levilactobacillus brevis (strain ATCC 367 / BCRC 12310 / CIP 105137 / JCM 1170 / LMG 11437 / NCIMB 947 / NCTC 947) (Lactobacillus brevis), this protein is Holliday junction resolvase RecU.